The primary structure comprises 134 residues: Retinoid-binding protein 7 (134 aa).

The protein belongs to the calycin superfamily. Fatty-acid binding protein (FABP) family. In terms of tissue distribution, highly expressed in white adipose tissue and mammary gland.

Its subcellular location is the cytoplasm. Intracellular transport of retinol. This chain is Retinoid-binding protein 7 (Rbp7), found in Mus musculus (Mouse).